A 520-amino-acid chain; its full sequence is DnaJ homolog l(2)tid, mitochondrial (520 aa).

Residues 1–62 constitute a mitochondrion transit peptide; it reads MMISCKKLFV…RRLHTTRDLL (62 aa). The residue at position 30 (Arg-30) is an Omega-N-methylarginine. Positions 65-130 constitute a J domain; it reads DYYATLGVAK…QKRREYDTYG (66 aa). Residue Lys-106 is modified to N6-acetyllysine. The CR-type zinc finger occupies 214–292; sequence GVNKDVNVNV…CEGKGRTVQR (79 aa). Residues Cys-227, Cys-230, Cys-244, Cys-247, Cys-266, Cys-269, Cys-280, and Cys-283 each contribute to the Zn(2+) site. A CXXCXGXG motif; approximate repeat occupies 227–234; it reads CPKCAGTK. A CXXCXGXG motif repeat occupies 244-251; the sequence is CQYCNGTG. A CXXCXGXG motif; approximate repeat occupies 266 to 273; it reads CRYCQGTR. The stretch at 280–287 is one CXXCXGXG motif repeat; sequence CSECEGKG. A disordered region spans residues 430–520; sequence QIHGIANRKD…FISKIKSMFN (91 aa). A compositionally biased stretch (low complexity) spans 446-476; it reads AGASEEPGAGAAAKASAAAAGSGASKPGPGA. A compositionally biased stretch (basic and acidic residues) spans 479–495; the sequence is SEGKDQWTDNKKTKAKE. Positions 496–511 are enriched in gly residues; it reads GGGSGSGQGDGGGGGF.

Interacts with ptc (via C-terminal cytoplasmic region); the interaction is probably direct. Interacts with hh/hedgehog; the interaction is probably mediated by the hedgehog receptor ptc. Appears to produce proteins of differing size. Predicted to have a molecular mass of 56 kDa (TID56) however proteins of 50 kDa, 47 kDa and 40 kDa have been identified and named TID50, TID47 and TID40. TID50 and TID40 localize to the mitochondria while TID47 localizes to the cytoplasm. TID50 is probably TID56 that has undergone mitochondrial transit peptide processing. TID40 and TID47 may be alternately processed proteins or may be isoforms resulting from alternative splicing. As to expression, ubiquitously expressed throughout embryonic development. In larvae, expression is seen in sensory organs, gopplet cells, gonads, imaginal disks, proventriculus, fat body, hematopoietic organ, midgut, Malpighian tubules and ring gland.

It localises to the cytoplasm. The protein resides in the cytosol. Its subcellular location is the mitochondrion. The protein localises to the mitochondrion outer membrane. In terms of biological role, involved in hh/hedgehog signaling. May act as a tumor suppressor in larval imaginal disks. The chain is DnaJ homolog l(2)tid, mitochondrial from Drosophila melanogaster (Fruit fly).